The sequence spans 316 residues: Acetyl-coenzyme A carboxylase carboxyl transferase subunit alpha (316 aa).

In terms of domain architecture, CoA carboxyltransferase C-terminal spans 40–290; the sequence is KARKELQRIY…RERFAHHLQE (251 aa).

Belongs to the AccA family. Acetyl-CoA carboxylase is a heterohexamer composed of biotin carboxyl carrier protein (AccB), biotin carboxylase (AccC) and two subunits each of ACCase subunit alpha (AccA) and ACCase subunit beta (AccD).

It localises to the cytoplasm. The enzyme catalyses N(6)-carboxybiotinyl-L-lysyl-[protein] + acetyl-CoA = N(6)-biotinyl-L-lysyl-[protein] + malonyl-CoA. It participates in lipid metabolism; malonyl-CoA biosynthesis; malonyl-CoA from acetyl-CoA: step 1/1. Component of the acetyl coenzyme A carboxylase (ACC) complex. First, biotin carboxylase catalyzes the carboxylation of biotin on its carrier protein (BCCP) and then the CO(2) group is transferred by the carboxyltransferase to acetyl-CoA to form malonyl-CoA. This Acidithiobacillus ferrooxidans (strain ATCC 23270 / DSM 14882 / CIP 104768 / NCIMB 8455) (Ferrobacillus ferrooxidans (strain ATCC 23270)) protein is Acetyl-coenzyme A carboxylase carboxyl transferase subunit alpha.